Consider the following 96-residue polypeptide: Co-chaperonin GroES (96 aa).

It belongs to the GroES chaperonin family. Heptamer of 7 subunits arranged in a ring. Interacts with the chaperonin GroEL.

The protein resides in the cytoplasm. Together with the chaperonin GroEL, plays an essential role in assisting protein folding. The GroEL-GroES system forms a nano-cage that allows encapsulation of the non-native substrate proteins and provides a physical environment optimized to promote and accelerate protein folding. GroES binds to the apical surface of the GroEL ring, thereby capping the opening of the GroEL channel. The sequence is that of Co-chaperonin GroES from Shewanella oneidensis (strain ATCC 700550 / JCM 31522 / CIP 106686 / LMG 19005 / NCIMB 14063 / MR-1).